A 302-amino-acid chain; its full sequence is Acetaldehyde dehydrogenase (302 aa).

Cys-131 acts as the Acyl-thioester intermediate in catalysis. Residues 162–170 and Asn-273 each bind NAD(+); that span reads SAGPGTRKN.

Belongs to the acetaldehyde dehydrogenase family.

The catalysed reaction is acetaldehyde + NAD(+) + CoA = acetyl-CoA + NADH + H(+). The chain is Acetaldehyde dehydrogenase from Acidovorax sp. (strain JS42).